The chain runs to 358 residues: DnaJ homolog subfamily C member 18 (358 aa).

The region spanning 82 to 146 (NYYEILGVSR…DKRLRYDEYG (65 aa)) is the J domain. A helical transmembrane segment spans residues 228–248 (AFIQLLPVLVIVIISVITQLL).

It localises to the endoplasmic reticulum membrane. (Microbial infection) In case of infection by polyomavirus, involved in the virus endoplasmic reticulum membrane penetration and infection. Regulates the recruitment of DNAJB12:DNAJB14 into SV40-induced foci and all cooperate to guide SV40 across the endoplasmic reticulum membrane. The foci represent the site from which SV40 penetrates into the cytosol. This is DnaJ homolog subfamily C member 18 from Homo sapiens (Human).